The primary structure comprises 587 residues: Succinate dehydrogenase flavoprotein subunit (587 aa).

FAD-binding positions include 15 to 20, 39 to 54, and Asp-223; these read GAGGAG and SKVF…AQGG. At His-47 the chain carries Tele-8alpha-FAD histidine. Positions 244 and 256 each coordinate substrate. Catalysis depends on Arg-288, which acts as the Proton acceptor. Substrate is bound at residue His-355. Glu-389 provides a ligand contact to FAD. Residue Arg-400 participates in substrate binding. 405–406 contributes to the FAD binding site; the sequence is SL.

The protein belongs to the FAD-dependent oxidoreductase 2 family. FRD/SDH subfamily. As to quaternary structure, part of an enzyme complex containing four subunits: a flavoprotein, an iron-sulfur protein, cytochrome b-556 and a hydrophobic protein. Requires FAD as cofactor.

The protein localises to the cell inner membrane. The catalysed reaction is a quinone + succinate = fumarate + a quinol. Its pathway is carbohydrate metabolism; tricarboxylic acid cycle; fumarate from succinate (bacterial route): step 1/1. The protein is Succinate dehydrogenase flavoprotein subunit (sdhA) of Coxiella burnetii (strain RSA 493 / Nine Mile phase I).